A 215-amino-acid chain; its full sequence is Ras-related protein Rab-5B (215 aa).

Thr2 is modified (N-acetylthreonine). 10 residues coordinate GTP: Ser29, Ala30, Gly32, Lys33, Ser34, Ser35, His46, Glu47, Thr52, and Gly78. Ser34 is a binding site for Mg(2+). 2 short sequence motifs (switch) span residues 44–56 (QFHEYQESTIGAA) and 77–93 (AGQERYHSLAPMYYRGA). A Mg(2+)-binding site is contributed by Thr52. Phosphoserine; by LRRK2 is present on Ser84. GTP is bound by residues Asn133, Lys134, Asp136, Ala164, and Lys165. The tract at residues 186-215 (PQNLGGAAGRSRGVDLHEQSQQNKSQCCSN) is disordered. Low complexity predominate over residues 204–215 (QSQQNKSQCCSN). 2 S-geranylgeranyl cysteine lipidation sites follow: Cys212 and Cys213.

Belongs to the small GTPase superfamily. Rab family. As to quaternary structure, binds EEA1. Interacts with RIN2 and RIN3, which probably regulate its pathway, possibly by acting as GEFs. Interacts with GDI1, GDI2, CHML and CHM; phosphorylation at Ser-84 disrupts this interaction. It depends on Mg(2+) as a cofactor. Phosphorylation of Ser-84 in the switch II region by LRRK2 prevents the association of RAB regulatory proteins, including CHM, CHML and RAB GDP dissociation inhibitors GDI1 and GDI2. Post-translationally, (Microbial infection) Glycosylated on arginine residues by S.typhimurium protein Ssek3.

Its subcellular location is the cell membrane. It localises to the early endosome membrane. It is found in the melanosome. The catalysed reaction is GTP + H2O = GDP + phosphate + H(+). Its activity is regulated as follows. Regulated by guanine nucleotide exchange factors (GEFs) which promote the exchange of bound GDP for free GTP. Regulated by GTPase activating proteins (GAPs) which increase the GTP hydrolysis activity. Inhibited by GDP dissociation inhibitors (GDIs). Its function is as follows. The small GTPases Rab are key regulators of intracellular membrane trafficking, from the formation of transport vesicles to their fusion with membranes. Rabs cycle between an inactive GDP-bound form and an active GTP-bound form that is able to recruit to membranes different sets of downstream effectors directly responsible for vesicle formation, movement, tethering and fusion. This is Ras-related protein Rab-5B from Homo sapiens (Human).